The primary structure comprises 147 residues: UPF0306 protein KPN78578_35330 (147 aa).

It belongs to the UPF0306 family.

The chain is UPF0306 protein KPN78578_35330 from Klebsiella pneumoniae subsp. pneumoniae (strain ATCC 700721 / MGH 78578).